The primary structure comprises 621 residues: Na(+)/H(+) antiporter NhaA (621 aa).

A na(+)/H(+) antiporter NhaA region spans residues 1 to 430; the sequence is MPASSFGESS…LGWLIFKVAA (430 aa). 11 consecutive transmembrane segments (helical) span residues 27-47, 72-92, 109-129, 139-159, 168-188, 192-212, 223-243, 300-320, 339-359, 375-395, and 409-429; these read GAAVLLVIVTVVALVWANSPL, LHHWVNDGLMVVFFFLIGLEV, LALIAGVTGVVLPALVYVLIV, GWGAVVGTDTAFMLGTLAIVG, VFLLTLTVVDDFLAVSIIGIV, EIRIVPLLIALASLVGLWLLG, VLIVIVLWFATVYSGIHASLA, FLRLPTALLIVPIFALANAGV, VIAGLVLGKLLGIGLTTLVAV, VFGGAALSGIGFTVSLLIIGL, and VGVLVSMVFATLLGWLIFKVA. One can recognise a Thioredoxin domain in the interval 431-578; it reads QRWGEKTADL…VERDLASAVA (148 aa).

This sequence in the N-terminal section; belongs to the NhaA Na(+)/H(+) (TC 2.A.33) antiporter family.

The protein resides in the cell inner membrane. It catalyses the reaction Na(+)(in) + 2 H(+)(out) = Na(+)(out) + 2 H(+)(in). In terms of biological role, na(+)/H(+) antiporter that extrudes sodium in exchange for external protons. This chain is Na(+)/H(+) antiporter NhaA, found in Herminiimonas arsenicoxydans.